The following is a 219-amino-acid chain: RING-H2 finger protein ATL78 (219 aa).

Residues 57–77 traverse the membrane as a helical segment; it reads VMVLSVLLCALVCSLGLNSII. Residues 131-173 form an RING-type; atypical zinc finger; sequence CAICLSEFVAEERVKLLPTCHHGFHVRCIDKWLSSHSSCPTCR.

The protein belongs to the RING-type zinc finger family. ATL subfamily.

Its subcellular location is the membrane. The enzyme catalyses S-ubiquitinyl-[E2 ubiquitin-conjugating enzyme]-L-cysteine + [acceptor protein]-L-lysine = [E2 ubiquitin-conjugating enzyme]-L-cysteine + N(6)-ubiquitinyl-[acceptor protein]-L-lysine.. The protein operates within protein modification; protein ubiquitination. This is RING-H2 finger protein ATL78 (ATL78) from Arabidopsis thaliana (Mouse-ear cress).